The chain runs to 447 residues: Probable glycine dehydrogenase (decarboxylating) subunit 1 (447 aa).

It belongs to the GcvP family. N-terminal subunit subfamily. The glycine cleavage system is composed of four proteins: P, T, L and H. In this organism, the P 'protein' is a heterodimer of two subunits.

It carries out the reaction N(6)-[(R)-lipoyl]-L-lysyl-[glycine-cleavage complex H protein] + glycine + H(+) = N(6)-[(R)-S(8)-aminomethyldihydrolipoyl]-L-lysyl-[glycine-cleavage complex H protein] + CO2. Its function is as follows. The glycine cleavage system catalyzes the degradation of glycine. The P protein binds the alpha-amino group of glycine through its pyridoxal phosphate cofactor; CO(2) is released and the remaining methylamine moiety is then transferred to the lipoamide cofactor of the H protein. The sequence is that of Probable glycine dehydrogenase (decarboxylating) subunit 1 from Beijerinckia indica subsp. indica (strain ATCC 9039 / DSM 1715 / NCIMB 8712).